A 257-amino-acid chain; its full sequence is MHLKAFGKVNLYLDVISRRKDNYHNILTLFQSINEHDDIFIEFSESEIFESEPPLNISWDNNIIKKSIETFKKETGFDNFNLKIKLIKNLPMGGGLGGGSADAAAVLNFLSKNFKISEKDLFEISCKIGSDVPFLLKGGTAIGKGKGEILEFLEPLKLNIQIYPMNYNIDTKKMYEKLDQNWKSINHFGDPYNLYEALKNNDIITAKQNAFNVFEQVAFKEYPKLKQKKEDMEKDEGIIFALMSGSGSTLYKVIYAN.

Residue K8 is part of the active site. Residue 91–101 (PMGGGLGGGSA) coordinates ATP. The active site involves D131.

Belongs to the GHMP kinase family. IspE subfamily.

The enzyme catalyses 4-CDP-2-C-methyl-D-erythritol + ATP = 4-CDP-2-C-methyl-D-erythritol 2-phosphate + ADP + H(+). The protein operates within isoprenoid biosynthesis; isopentenyl diphosphate biosynthesis via DXP pathway; isopentenyl diphosphate from 1-deoxy-D-xylulose 5-phosphate: step 3/6. Its function is as follows. Catalyzes the phosphorylation of the position 2 hydroxy group of 4-diphosphocytidyl-2C-methyl-D-erythritol. The protein is 4-diphosphocytidyl-2-C-methyl-D-erythritol kinase of Petrotoga mobilis (strain DSM 10674 / SJ95).